Consider the following 339-residue polypeptide: Ketol-acid reductoisomerase (NADP(+)) (339 aa).

The KARI N-terminal Rossmann domain maps to methionine 1 to threonine 182. Residues tyrosine 24–glutamine 27, arginine 48, serine 51, threonine 53, and aspartate 83–glutamine 86 each bind NADP(+). Residue histidine 108 is part of the active site. Position 134 (glycine 134) interacts with NADP(+). A KARI C-terminal knotted domain is found at threonine 183 to isoleucine 328. Mg(2+) contacts are provided by aspartate 191, glutamate 195, glutamate 227, and glutamate 231. Serine 252 provides a ligand contact to substrate.

The protein belongs to the ketol-acid reductoisomerase family. Mg(2+) serves as cofactor.

It catalyses the reaction (2R)-2,3-dihydroxy-3-methylbutanoate + NADP(+) = (2S)-2-acetolactate + NADPH + H(+). It carries out the reaction (2R,3R)-2,3-dihydroxy-3-methylpentanoate + NADP(+) = (S)-2-ethyl-2-hydroxy-3-oxobutanoate + NADPH + H(+). Its pathway is amino-acid biosynthesis; L-isoleucine biosynthesis; L-isoleucine from 2-oxobutanoate: step 2/4. It functions in the pathway amino-acid biosynthesis; L-valine biosynthesis; L-valine from pyruvate: step 2/4. Functionally, involved in the biosynthesis of branched-chain amino acids (BCAA). Catalyzes an alkyl-migration followed by a ketol-acid reduction of (S)-2-acetolactate (S2AL) to yield (R)-2,3-dihydroxy-isovalerate. In the isomerase reaction, S2AL is rearranged via a Mg-dependent methyl migration to produce 3-hydroxy-3-methyl-2-ketobutyrate (HMKB). In the reductase reaction, this 2-ketoacid undergoes a metal-dependent reduction by NADPH to yield (R)-2,3-dihydroxy-isovalerate. This Methylocella silvestris (strain DSM 15510 / CIP 108128 / LMG 27833 / NCIMB 13906 / BL2) protein is Ketol-acid reductoisomerase (NADP(+)).